Reading from the N-terminus, the 594-residue chain is RING finger protein 207 (594 aa).

The RING-type zinc-finger motif lies at 25 to 64 (CPLCHAQYERPCLLDCFHDFCAGCLRGRTADGRVACPLCQ). The B box-type; atypical zinc-finger motif lies at 93–145 (VEAVHCANCDLDCSKQDAETACFCNTCGQPLCARCRDETHRARMFARHDIVAL). Residues Cys98, Cys101, Cys127, and His132 each coordinate Zn(2+). Residues 369–400 (NTLAGGSGPKVLMGPSCPSPVRKVSRSPVQKP) form a disordered region. Positions 424–458 (CRHYEDSYRGLQAEVQNLKDQVQELHRDLTKHHSL) form a coiled coil. Residues 552–594 (FQASADDESENPQTAYDASRNGETPASLLLPGSVASAEPPFVN) form a disordered region. Residues 562-575 (NPQTAYDASRNGET) are compositionally biased toward polar residues.

In terms of assembly, interacts with the core-glycosylated, but not the fully glycosylated form of KCNH2/HERG. Interacts with DNAJA1 and HSPA8. Interacts (via the C-terminus) with HSPA1A; this interaction additively increases KCNH2 expression.

It is found in the cytoplasm. Plays a role in cardiac repolarization possibly by stabilizing membrane expression of the potassium channel KCNH2/HERG, or by assisting its synthesis, folding or export from the endoplasmic reticulum, in a heat shock protein-dependent manner. The sequence is that of RING finger protein 207 (RNF207) from Oryctolagus cuniculus (Rabbit).